A 490-amino-acid chain; its full sequence is ATP synthase subunit beta, chloroplastic (490 aa).

T6 carries the post-translational modification Phosphothreonine. S13 carries the post-translational modification Phosphoserine. G172 to T179 provides a ligand contact to ATP.

This sequence belongs to the ATPase alpha/beta chains family. As to quaternary structure, F-type ATPases have 2 components, CF(1) - the catalytic core - and CF(0) - the membrane proton channel. CF(1) has five subunits: alpha(3), beta(3), gamma(1), delta(1), epsilon(1). CF(0) has four main subunits: a(1), b(1), b'(1) and c(9-12).

It localises to the plastid. It is found in the chloroplast thylakoid membrane. The enzyme catalyses ATP + H2O + 4 H(+)(in) = ADP + phosphate + 5 H(+)(out). Produces ATP from ADP in the presence of a proton gradient across the membrane. The catalytic sites are hosted primarily by the beta subunits. This is ATP synthase subunit beta, chloroplastic from Aethionema grandiflorum (Persian stone-cress).